The sequence spans 452 residues: Oxygen-independent coproporphyrinogen III oxidase (452 aa).

One can recognise a Radical SAM core domain in the interval 45–278 (LDPAVPISVY…ANLAAKMFTE (234 aa)). Y54 contributes to the S-adenosyl-L-methionine binding site. Positions 60 and 64 each coordinate [4Fe-4S] cluster. Residue F66 participates in S-adenosyl-L-methionine binding. C67 is a binding site for [4Fe-4S] cluster. S-adenosyl-L-methionine-binding positions include G111, 112–113 (GT), E144, Q171, R183, D208, A242, and I328.

It belongs to the anaerobic coproporphyrinogen-III oxidase family. Monomer. The cofactor is [4Fe-4S] cluster.

It is found in the cytoplasm. It catalyses the reaction coproporphyrinogen III + 2 S-adenosyl-L-methionine = protoporphyrinogen IX + 2 5'-deoxyadenosine + 2 L-methionine + 2 CO2. It participates in porphyrin-containing compound metabolism; protoporphyrin-IX biosynthesis; protoporphyrinogen-IX from coproporphyrinogen-III (AdoMet route): step 1/1. Involved in the heme and chlorophyll biosynthesis. Catalyzes the anaerobic oxidative decarboxylation of propionate groups of rings A and B of coproporphyrinogen III to yield the vinyl groups in protoporphyrinogen IX. The sequence is that of Oxygen-independent coproporphyrinogen III oxidase (hemN) from Cereibacter sphaeroides (strain ATCC 17025 / ATH 2.4.3) (Rhodobacter sphaeroides).